A 20-amino-acid chain; its full sequence is Luminal-binding protein (20 aa).

This sequence belongs to the heat shock protein 70 family.

The protein resides in the endoplasmic reticulum lumen. In terms of biological role, probably plays a role in facilitating the assembly of multimeric protein complexes inside the ER. This is Luminal-binding protein from Phaseolus vulgaris (Kidney bean).